We begin with the raw amino-acid sequence, 325 residues long: Heme A synthase (325 aa).

The next 5 membrane-spanning stretches (helical) occupy residues 6 to 26 (WLAVCILLILSMVSIGGFTRL), 88 to 108 (LVGRILGLVFFIGLVYFFVVG), 116 to 136 (LRLCFALVLGVIQGFVGWYMV), 155 to 175 (LFCASLLFMVLVYEFLSPTVI), and 184 to 204 (LVGCSLMFLLSMQIILGGLVA). H246 is a binding site for heme. A run of 3 helical transmembrane segments spans residues 248 to 268 (MSAFLLTFICLVCLVISFFYD), 275 to 295 (VFLVASMMLLQMFFGVLTLLF), and 297 to 317 (IPIDIALLHQIMAFILLGICV). H305 lines the heme pocket.

Belongs to the COX15/CtaA family. Type 2 subfamily. As to quaternary structure, interacts with CtaB. The cofactor is heme b.

Its subcellular location is the cell membrane. It catalyses the reaction Fe(II)-heme o + 2 A + H2O = Fe(II)-heme a + 2 AH2. It functions in the pathway porphyrin-containing compound metabolism; heme A biosynthesis; heme A from heme O: step 1/1. Catalyzes the conversion of heme O to heme A by two successive hydroxylations of the methyl group at C8. The first hydroxylation forms heme I, the second hydroxylation results in an unstable dihydroxymethyl group, which spontaneously dehydrates, resulting in the formyl group of heme A. This chain is Heme A synthase, found in Neorickettsia sennetsu (strain ATCC VR-367 / Miyayama) (Ehrlichia sennetsu).